The sequence spans 1071 residues: ATP-dependent helicase/deoxyribonuclease subunit B (1071 aa).

This sequence belongs to the helicase family. AddB/RexB type 2 subfamily. Heterodimer of AddA and RexB. It depends on Mg(2+) as a cofactor.

In terms of biological role, the heterodimer acts as both an ATP-dependent DNA helicase and an ATP-dependent, dual-direction single-stranded exonuclease. Recognizes the chi site generating a DNA molecule suitable for the initiation of homologous recombination. This subunit has 5' -&gt; 3' nuclease activity but not helicase activity. This chain is ATP-dependent helicase/deoxyribonuclease subunit B, found in Streptococcus pyogenes serotype M3 (strain ATCC BAA-595 / MGAS315).